The sequence spans 147 residues: Large ribosomal subunit protein uL11 (147 aa).

This sequence belongs to the universal ribosomal protein uL11 family. In terms of assembly, part of the ribosomal stalk of the 50S ribosomal subunit. Interacts with L10 and the large rRNA to form the base of the stalk. L10 forms an elongated spine to which L12 dimers bind in a sequential fashion forming a multimeric L10(L12)X complex. One or more lysine residues are methylated.

Its function is as follows. Forms part of the ribosomal stalk which helps the ribosome interact with GTP-bound translation factors. The protein is Large ribosomal subunit protein uL11 of Parabacteroides distasonis (strain ATCC 8503 / DSM 20701 / CIP 104284 / JCM 5825 / NCTC 11152).